The primary structure comprises 308 residues: Oxygen-dependent coproporphyrinogen-III oxidase (308 aa).

S100 contributes to the substrate binding site. H104 and H114 together coordinate a divalent metal cation. The Proton donor role is filled by H114. 116–118 is a binding site for substrate; that stretch reads NFR. Residues H153 and H183 each contribute to the a divalent metal cation site. Residues 248–283 form an important for dimerization region; that stretch reads YVEFNLVFDRGTIFGLQSGGRTESILSSMPPMATWK. Position 266 to 268 (266 to 268) interacts with substrate; it reads GGR.

The protein belongs to the aerobic coproporphyrinogen-III oxidase family. As to quaternary structure, homodimer. A divalent metal cation is required as a cofactor.

It is found in the cytoplasm. It carries out the reaction coproporphyrinogen III + O2 + 2 H(+) = protoporphyrinogen IX + 2 CO2 + 2 H2O. The protein operates within porphyrin-containing compound metabolism; protoporphyrin-IX biosynthesis; protoporphyrinogen-IX from coproporphyrinogen-III (O2 route): step 1/1. Its function is as follows. Involved in the heme biosynthesis. Catalyzes the aerobic oxidative decarboxylation of propionate groups of rings A and B of coproporphyrinogen-III to yield the vinyl groups in protoporphyrinogen-IX. The protein is Oxygen-dependent coproporphyrinogen-III oxidase of Francisella tularensis subsp. mediasiatica (strain FSC147).